Reading from the N-terminus, the 488-residue chain is UDP-N-acetylmuramate--L-alanine ligase (488 aa).

Position 127 to 133 (127 to 133 (GTHGKTT)) interacts with ATP.

Belongs to the MurCDEF family.

Its subcellular location is the cytoplasm. The enzyme catalyses UDP-N-acetyl-alpha-D-muramate + L-alanine + ATP = UDP-N-acetyl-alpha-D-muramoyl-L-alanine + ADP + phosphate + H(+). It functions in the pathway cell wall biogenesis; peptidoglycan biosynthesis. Its function is as follows. Cell wall formation. The protein is UDP-N-acetylmuramate--L-alanine ligase of Shewanella putrefaciens (strain CN-32 / ATCC BAA-453).